A 446-amino-acid chain; its full sequence is Argininosuccinate synthase (446 aa).

ATP-binding positions include 17–25 (AFSGGLDTS) and alanine 43. Residue tyrosine 99 coordinates L-citrulline. The ATP site is built by glycine 129 and threonine 131. Threonine 131, asparagine 135, and aspartate 136 together coordinate L-aspartate. Position 135 (asparagine 135) interacts with L-citrulline. Aspartate 136 lines the ATP pocket. Residues arginine 139 and serine 192 each coordinate L-citrulline. Aspartate 194 is a binding site for ATP. L-citrulline-binding residues include threonine 201, glutamate 203, and glutamate 280.

Belongs to the argininosuccinate synthase family. Type 2 subfamily. Homotetramer.

The protein resides in the cytoplasm. It carries out the reaction L-citrulline + L-aspartate + ATP = 2-(N(omega)-L-arginino)succinate + AMP + diphosphate + H(+). It participates in amino-acid biosynthesis; L-arginine biosynthesis; L-arginine from L-ornithine and carbamoyl phosphate: step 2/3. The polypeptide is Argininosuccinate synthase (Burkholderia thailandensis (strain ATCC 700388 / DSM 13276 / CCUG 48851 / CIP 106301 / E264)).